Here is a 92-residue protein sequence, read N- to C-terminus: Progonadoliberin-1 (92 aa).

The first 23 residues, 1 to 23 (MELVPKFLAGLILLTLCVGGCYA), serve as a signal peptide directing secretion. Residue Q24 is modified to Pyrrolidone carboxylic acid. G33 bears the Glycine amide mark.

This sequence belongs to the GnRH family.

It is found in the secreted. Functionally, stimulates the secretion of gonadotropins; it stimulates the secretion of both luteinizing and follicle-stimulating hormones. This Tupaia belangeri (Common tree shrew) protein is Progonadoliberin-1 (GNRH1).